An 842-amino-acid polypeptide reads, in one-letter code: Elongation factor 2 (842 aa).

Residues 17–346 form the tr-type G domain; that stretch reads ANVRNMSVIA…MIVLHLPSPV (330 aa). GTP is bound by residues 26-33, 158-161, and 213-215; these read AHVDHGKS, NKVD, and SGL. Histidine 699 carries the diphthamide modification.

This sequence belongs to the TRAFAC class translation factor GTPase superfamily. Classic translation factor GTPase family. EF-G/EF-2 subfamily.

The protein localises to the cytoplasm. It carries out the reaction GTP + H2O = GDP + phosphate + H(+). The protein operates within protein biosynthesis; polypeptide chain elongation. Catalyzes the GTP-dependent ribosomal translocation step during translation elongation. During this step, the ribosome changes from the pre-translocational (PRE) to the post-translocational (POST) state as the newly formed A-site-bound peptidyl-tRNA and P-site-bound deacylated tRNA move to the P and E sites, respectively. Catalyzes the coordinated movement of the two tRNA molecules, the mRNA and conformational changes in the ribosome. This Meyerozyma guilliermondii (strain ATCC 6260 / CBS 566 / DSM 6381 / JCM 1539 / NBRC 10279 / NRRL Y-324) (Yeast) protein is Elongation factor 2 (EFT2).